Consider the following 192-residue polypeptide: Elongation factor P (192 aa).

It belongs to the elongation factor P family.

It is found in the cytoplasm. It participates in protein biosynthesis; polypeptide chain elongation. Its function is as follows. Involved in peptide bond synthesis. Stimulates efficient translation and peptide-bond synthesis on native or reconstituted 70S ribosomes in vitro. Probably functions indirectly by altering the affinity of the ribosome for aminoacyl-tRNA, thus increasing their reactivity as acceptors for peptidyl transferase. This Borreliella afzelii (strain PKo) (Borrelia afzelii) protein is Elongation factor P.